A 464-amino-acid chain; its full sequence is Protein FAM90A11 (464 aa).

Disordered stretches follow at residues 1 to 42 (MMAR…DPRL), 70 to 389 (PATL…HDGA), and 415 to 437 (HSPE…SEAP). 2 stretches are compositionally biased toward basic and acidic residues: residues 74–89 (GKKE…KPRV) and 97–114 (NKDK…DPQR). Positions 180 to 197 (LASLSPLRKASLSSSSSL) are enriched in low complexity. Positions 341-356 (GPSTSPQMGRRTSAQV) are enriched in polar residues.

This sequence belongs to the FAM90 family.

This Homo sapiens (Human) protein is Protein FAM90A11.